The following is a 241-amino-acid chain: Large ribosomal subunit protein uL1 (241 aa).

Belongs to the universal ribosomal protein uL1 family. As to quaternary structure, part of the 50S ribosomal subunit.

Binds directly to 23S rRNA. The L1 stalk is quite mobile in the ribosome, and is involved in E site tRNA release. Its function is as follows. Protein L1 is also a translational repressor protein, it controls the translation of the L11 operon by binding to its mRNA. The protein is Large ribosomal subunit protein uL1 of Streptomyces coelicolor (strain ATCC BAA-471 / A3(2) / M145).